The primary structure comprises 180 residues: Large ribosomal subunit protein uL6 (180 aa).

Belongs to the universal ribosomal protein uL6 family. As to quaternary structure, part of the 50S ribosomal subunit.

Its function is as follows. This protein binds to the 23S rRNA, and is important in its secondary structure. It is located near the subunit interface in the base of the L7/L12 stalk, and near the tRNA binding site of the peptidyltransferase center. The chain is Large ribosomal subunit protein uL6 from Desulforapulum autotrophicum (strain ATCC 43914 / DSM 3382 / VKM B-1955 / HRM2) (Desulfobacterium autotrophicum).